A 161-amino-acid chain; its full sequence is Phosphopantetheine adenylyltransferase (161 aa).

Serine 9 is a binding site for substrate. ATP contacts are provided by residues 9–10 (SF) and histidine 17. Substrate contacts are provided by lysine 41, threonine 73, and arginine 87. ATP-binding positions include 88–90 (GLR), glutamate 98, and 123–129 (FAHISST).

The protein belongs to the bacterial CoaD family. As to quaternary structure, homohexamer. Mg(2+) serves as cofactor.

It is found in the cytoplasm. The catalysed reaction is (R)-4'-phosphopantetheine + ATP + H(+) = 3'-dephospho-CoA + diphosphate. Its pathway is cofactor biosynthesis; coenzyme A biosynthesis; CoA from (R)-pantothenate: step 4/5. Reversibly transfers an adenylyl group from ATP to 4'-phosphopantetheine, yielding dephospho-CoA (dPCoA) and pyrophosphate. The sequence is that of Phosphopantetheine adenylyltransferase from Chloroflexus aurantiacus (strain ATCC 29366 / DSM 635 / J-10-fl).